The sequence spans 359 residues: F-box protein At1g10895 (359 aa).

In terms of domain architecture, F-box spans 2-48 (TTMSDLDEIMVAEILCRTPMTCLKTVRSVCKKWNALSKKWFFFGKAK).

The protein is F-box protein At1g10895 of Arabidopsis thaliana (Mouse-ear cress).